A 473-amino-acid chain; its full sequence is MFRLRFIPAVAGLAAVSRRYHGVANHARSRRRLMMAAFVGATAVSASAGLLWKRANAEAQSSVKHSMREETSEKEKEDADQAVESSDEDQPQEGKKKKARVGFRDRKVMEYENRIRAYSTPDKIFRYFATLKVIHESGESEVFMTPQDFVRSITPNEKQPENLGLDQFIIKRYDGKKISQEREKFADEDSIFYSLGECGLISFSDYIFLTTVLSTPQRNFEIAFKMFDLNGDGEVDMEEFEQVQSIIRSQTSMGMRHRDRSTTGNTLKTGFSSALTTYFFGADLKGKLTIKNFLEFQRKLQHDVLKLEFERHDPVDGHITERQFGSMLLAYSGVQSKKLTHMLKQLKKRFKDAEGLTFEEVENFFTFLKNINDVDTALSFYHMAGASLDKVTMQQVARTVAKVELSDHVCDVVFALFDCDGNGELSNKEFIAIMKQRLMRGLEKPKDMGFTRLMRAMWKCAQETAWDFAMPKQ.

A mitochondrion-targeting transit peptide spans 1 to 33 (MFRLRFIPAVAGLAAVSRRYHGVANHARSRRRL). The interval 61–101 (SSVKHSMREETSEKEKEDADQAVESSDEDQPQEGKKKKARV) is disordered. Positions 66–79 (SMREETSEKEKEDA) are enriched in basic and acidic residues. Residues 80–91 (DQAVESSDEDQP) are compositionally biased toward acidic residues. The segment at 96-107 (KKKARVGFRDRK) is polybasic region. The tract at residues 123 to 126 (KIFR) is k/R-ring. In terms of domain architecture, EF-hand 1 spans 215–250 (TPQRNFEIAFKMFDLNGDGEVDMEEFEQVQSIIRSQ). Residues Asp228, Asn230, Asp232, Glu234, and Glu239 each contribute to the Ca(2+) site. Residues 256-260 (RHRDR) are k/R-ring. The EF-hand 2 domain occupies 405-440 (LSDHVCDVVFALFDCDGNGELSNKEFIAIMKQRLMR). Ca(2+)-binding residues include Asp418, Asp420, Asn422, Glu424, and Glu429. Residues 452-462 (RLMRAMWKCAQ) form a C-helix region region.

The protein belongs to the MICU1 family. MICU1 subfamily. In terms of assembly, heterodimer; disulfide-linked; heterodimerizes with micu2. Component of the uniplex complex.

It is found in the mitochondrion intermembrane space. The protein localises to the mitochondrion inner membrane. Functionally, calcium sensor of the mitochondrial calcium uniporter (mcu) channel, which senses calcium level via its EF-hand domains. micu1 and micu2 form a disulfide-linked heterodimer that stimulates and inhibits MCU activity, depending on the concentration of calcium. At low calcium levels, micu1 occludes the pore of the MCU channel, preventing mitochondrial calcium uptake. At higher calcium levels, calcium-binding to micu1 and micu2 induces a conformational change that weakens mcu-micu1 interactions and moves the micu1-micu2 heterodimer away from the pore, allowing calcium permeation through the mcu channel. Also required to protect against manganese toxicity by preventing manganese uptake by mcu. In Xenopus tropicalis (Western clawed frog), this protein is Calcium uptake protein 1, mitochondrial (micu1).